The sequence spans 712 residues: Polyribonucleotide nucleotidyltransferase (712 aa).

Residues Asp-493 and Asp-499 each contribute to the Mg(2+) site. Residues 560–619 (PRLLTFKVDPEDIGKIIGPGGKMVRSITEATGAKVDISDDGTITVSSSVGGQAEAARAMI) form the KH domain. In terms of domain architecture, S1 motif spans 629–697 (GQVYLGKVTR…HKGRVNLTRL (69 aa)).

The protein belongs to the polyribonucleotide nucleotidyltransferase family. Requires Mg(2+) as cofactor.

It is found in the cytoplasm. It catalyses the reaction RNA(n+1) + phosphate = RNA(n) + a ribonucleoside 5'-diphosphate. Functionally, involved in mRNA degradation. Catalyzes the phosphorolysis of single-stranded polyribonucleotides processively in the 3'- to 5'-direction. In Synechococcus sp. (strain JA-3-3Ab) (Cyanobacteria bacterium Yellowstone A-Prime), this protein is Polyribonucleotide nucleotidyltransferase.